The following is a 25-amino-acid chain: GLVSSIGRALGGLLADVVKSKGQPA.

As to expression, expressed by the skin dorsal glands.

Its subcellular location is the secreted. Its function is as follows. Antibacterial peptide with narrow spectrum of activity. Active against the Gram-negative bacterium P.multocida (MIC=25 ug/ml). Inhibits the formation of NO by neuronal nitric oxide synthase with an IC(50) of 9 ug/ml. The polypeptide is Caerin 2.1 (Litoria peronii (Emerald spotted tree frog)).